Reading from the N-terminus, the 743-residue chain is Threonine synthase-like 1 (743 aa).

Lys-281 carries the N6-acetyllysine modification. An N6-(pyridoxal phosphate)lysine modification is found at Lys-351.

It belongs to the threonine synthase family. Pyridoxal 5'-phosphate serves as cofactor.

The polypeptide is Threonine synthase-like 1 (THNSL1) (Macaca fascicularis (Crab-eating macaque)).